The chain runs to 106 residues: Protein translation factor SUI1 homolog (106 aa).

It belongs to the SUI1 family.

The polypeptide is Protein translation factor SUI1 homolog (Methanopyrus kandleri (strain AV19 / DSM 6324 / JCM 9639 / NBRC 100938)).